A 520-amino-acid chain; its full sequence is Peptide chain release factor 3 (520 aa).

The 266-residue stretch at 8-273 folds into the tr-type G domain; sequence ESRKTFAIIS…AYVDHAPMPN (266 aa). Residues 17–24, 85–89, and 139–142 contribute to the GTP site; these read SHPDAGKT, DTPGH, and NKLD.

Belongs to the TRAFAC class translation factor GTPase superfamily. Classic translation factor GTPase family. PrfC subfamily.

The protein localises to the cytoplasm. Functionally, increases the formation of ribosomal termination complexes and stimulates activities of RF-1 and RF-2. It binds guanine nucleotides and has strong preference for UGA stop codons. It may interact directly with the ribosome. The stimulation of RF-1 and RF-2 is significantly reduced by GTP and GDP, but not by GMP. This Staphylococcus carnosus (strain TM300) protein is Peptide chain release factor 3.